The chain runs to 196 residues: Cupin-domain-containing oxidoreductase srdB (196 aa).

One can recognise a Cupin type-2 domain in the interval 92–156; that stretch reads DFAPGCKSNM…TSDEKPARML (65 aa).

This sequence belongs to the virC family.

In terms of biological role, cupin-domain-containing oxidoreductase; part of the gene cluster that mediates the biosynthesis of sordarial, a salicylic aldehyde structurally related to the phytotoxin pyriculol. The most interesting aspect of this pathway is formation of an aromatic product from the highly reducing polyketide synthase srdA. SrdA synthesizes a reduced polyketide chain from one molecule of acetyl-CoA and five molecules of malonyl-CoA. The polyketide chain is then reductively released as an aldehyde. The oxidoreductases srdC, srdD and srdE then oxidize one of the hydroxy groups to facilitate the intramolecular aldol condensation, followed by dehydration to yield a salicylic aldehyde. This aldehyde can undergo facile reduction by endogenous reductases to yield the alcohol 1-hydroxy-2-hydroxymethyl-3-pent-1,3-dienylbenzene. The flavin-dependent srdI counteract against the propensity of the aldehydes to be reduced under physiological conditions and is responsible for reoxidizing 1-hydroxy-2-hydroxymethyl-3-pent-1,3-dienylbenzene back to the salicylic aldehyde. This salicylic aldehyde is then selectively epoxidized by the cupin-domain-containing oxidoreductase srdB to yield the epoxide, which can be hydrolyzed stereoselectively by the hydrolase srdG to give the final product sordarial. In Neurospora crassa (strain ATCC 24698 / 74-OR23-1A / CBS 708.71 / DSM 1257 / FGSC 987), this protein is Cupin-domain-containing oxidoreductase srdB.